Here is a 562-residue protein sequence, read N- to C-terminus: Pentatricopeptide repeat-containing protein At3g22670, mitochondrial (562 aa).

A mitochondrion-targeting transit peptide spans 1–31 (MLTKLRISKLVSYTLPRRIFQRRFLVTNNTA). PPR repeat units lie at residues 165-199 (SGHTYNAMVDVLGKCRNFDLMWELVNEMNKNEESK), 202-232 (TLDTMSKVMRRLAKSGKYNKAVDAFLEMEKS), 238-268 (DTIAMNSLMDALVKENSIEHAHEVFLKLFDT), 272-306 (DARTFNILIHGFCKARKFDDARAMMDLMKVTEFTP), 307-341 (DVVTYTSFVEAYCKEGDFRRVNEMLEEMRENGCNP), 342-376 (NVVTYTIVMHSLGKSKQVAEALGVYEKMKEDGCVP), 377-411 (DAKFYSSLIHILSKTGRFKDAAEIFEDMTNQGVRR), 412-446 (DVLVYNTMISAALHHSRDEMALRLLKRMEDEEGES), 450-484 (NVETYAPLLKMCCHKKKMKLLGILLHHMVKNDVSI), and 485-519 (DVSTYILLIRGLCMSGKVEEACLFFEEAVRKGMVP).

The protein belongs to the PPR family. P subfamily.

The protein localises to the mitochondrion. This Arabidopsis thaliana (Mouse-ear cress) protein is Pentatricopeptide repeat-containing protein At3g22670, mitochondrial.